A 95-amino-acid polypeptide reads, in one-letter code: Pyruvate dehydrogenase inhibitor (95 aa).

The protein belongs to the HesB/IscA family. As to quaternary structure, interacts with the E1 module of pyruvate dehydrogenase (PdhA-PdhB).

Acts as an inhibitor of the pyruvate dehydrogenase. Overexpression does not affect growth with glucose as the main carbon source, but it leads to a dramatic growth defect when cells are grown with pyruvate as the sole carbon source. In Bacillus subtilis (strain 168), this protein is Pyruvate dehydrogenase inhibitor.